The following is an 81-amino-acid chain: Protein Vpu (81 aa).

Topologically, residues 1–7 are extracellular; that stretch reads MQSLQIL. A helical membrane pass occupies residues 8 to 28; it reads AIVSLVVVAIIAIVVWTIVLI. Over 29 to 81 the chain is Cytoplasmic; it reads EYRKILRQRKIDRLFDRIREKAEDSGNESERDQEELSALVEMGHLAPWDVDDL. Phosphoserine; by host CK2 is present on residues S53 and S57.

The protein belongs to the HIV-1 VPU protein family. In terms of assembly, homopentamer. Interacts with host CD4 and BRTC; these interactions induce proteasomal degradation of CD4. Interacts with host BST2; this interaction leads to the degradation of host BST2. Interacts with host FBXW11. Interacts with host AP1M1; this interaction plays a role in the mistrafficking and subsequent degradation of host BST2. Interacts with host RANBP2; this interaction allows Vpu to down-regulate host BLM sumoylation. In terms of processing, phosphorylated by host CK2. This phosphorylation is necessary for interaction with human BTRC and degradation of CD4.

It localises to the host membrane. With respect to regulation, ion channel activity is inhibited by hexamethylene amiloride in vitro. Its function is as follows. Enhances virion budding by targeting host CD4 and Tetherin/BST2 to proteasome degradation. Degradation of CD4 prevents any unwanted premature interactions between viral Env and its host receptor CD4 in the endoplasmic reticulum. Degradation of antiretroviral protein Tetherin/BST2 is important for virion budding, as BST2 tethers new viral particles to the host cell membrane. Mechanistically, Vpu bridges either CD4 or BST2 to BTRC, a substrate recognition subunit of the Skp1/Cullin/F-box protein E3 ubiquitin ligase, induces their ubiquitination and subsequent proteasomal degradation. The alteration of the E3 ligase specificity by Vpu seems to promote the degradation of host IKBKB, leading to NF-kappa-B down-regulation and subsequent apoptosis. Acts as a viroporin that forms an oligomeric ion channel in membranes. Modulates the host DNA repair mechanisms to promote degradation of nuclear viral cDNA in cells that are already productively infected in order to suppress immune sensing and proviral hyper-integration (superinfection). Manipulates PML-NBs and modulates SUMOylation of host BLM protein thereby enhancing its DNA-end processing activity toward viral unintegrated linear DNA. Also inhibits RAD52-mediated homologous repair of viral cDNA, preventing the generation of dead-end circular forms of single copies of the long terminal repeat and permitting sustained nucleolytic attack. The sequence is that of Protein Vpu from Homo sapiens (Human).